A 345-amino-acid chain; its full sequence is Erythronate-4-phosphate dehydrogenase (345 aa).

Ser-45 lines the substrate pocket. NAD(+)-binding residues include Asp-146 and Thr-174. Arg-207 is a catalytic residue. Asp-227 serves as a coordination point for NAD(+). The active site involves Glu-232. His-249 functions as the Proton donor in the catalytic mechanism. Residue Gly-252 coordinates NAD(+).

The protein belongs to the D-isomer specific 2-hydroxyacid dehydrogenase family. PdxB subfamily. In terms of assembly, homodimer.

It localises to the cytoplasm. The catalysed reaction is 4-phospho-D-erythronate + NAD(+) = (R)-3-hydroxy-2-oxo-4-phosphooxybutanoate + NADH + H(+). It functions in the pathway cofactor biosynthesis; pyridoxine 5'-phosphate biosynthesis; pyridoxine 5'-phosphate from D-erythrose 4-phosphate: step 2/5. Its function is as follows. Catalyzes the oxidation of erythronate-4-phosphate to 3-hydroxy-2-oxo-4-phosphonooxybutanoate. This Ruthia magnifica subsp. Calyptogena magnifica protein is Erythronate-4-phosphate dehydrogenase.